The chain runs to 114 residues: uncharacterized protein (114 aa).

It to M.kandleri MK0008.

This is an uncharacterized protein from Methanocaldococcus jannaschii (strain ATCC 43067 / DSM 2661 / JAL-1 / JCM 10045 / NBRC 100440) (Methanococcus jannaschii).